The chain runs to 1026 residues: RecBCD enzyme subunit RecB (1026 aa).

Positions 1–438 (MSSFDIFSPT…LILDTNYRST (438 aa)) constitute a UvrD-like helicase ATP-binding domain. Residues 1–766 (MSSFDIFSPT…LANYANITQH (766 aa)) form a DNA-binding and helicase activity, interacts with RecC region. 21–28 (ASAGTGKT) is a binding site for ATP. Positions 452-700 (PSPFLETPQT…KITTVHSSKG (249 aa)) constitute a UvrD-like helicase C-terminal domain. The segment at 815 to 1026 (SQPIYSFSST…KGNGFLQPSP (212 aa)) is nuclease activity, interacts with RecD and RecA. Mg(2+) contacts are provided by H854, D940, and D953. Catalysis depends on D953, which acts as the For nuclease activity.

The protein belongs to the helicase family. UvrD subfamily. In terms of assembly, heterotrimer of RecB, RecC and RecD. All subunits contribute to DNA-binding. Interacts with RecA. The cofactor is Mg(2+).

It carries out the reaction Exonucleolytic cleavage (in the presence of ATP) in either 5'- to 3'- or 3'- to 5'-direction to yield 5'-phosphooligonucleotides.. The catalysed reaction is Couples ATP hydrolysis with the unwinding of duplex DNA by translocating in the 3'-5' direction.. The enzyme catalyses ATP + H2O = ADP + phosphate + H(+). Its function is as follows. A helicase/nuclease that prepares dsDNA breaks (DSB) for recombinational DNA repair. Binds to DSBs and unwinds DNA via a highly rapid and processive ATP-dependent bidirectional helicase activity. Unwinds dsDNA until it encounters a Chi (crossover hotspot instigator) sequence from the 3' direction. Cuts ssDNA a few nucleotides 3' to the Chi site. The properties and activities of the enzyme are changed at Chi. The Chi-altered holoenzyme produces a long 3'-ssDNA overhang and facilitates RecA-binding to the ssDNA for homologous DNA recombination and repair. Holoenzyme degrades any linearized DNA that is unable to undergo homologous recombination. In the holoenzyme this subunit contributes ATPase, 3'-5' helicase, exonuclease activity and loads RecA onto ssDNA. The polypeptide is RecBCD enzyme subunit RecB (Chlamydia muridarum (strain MoPn / Nigg)).